The chain runs to 338 residues: Tetraacyldisaccharide 4'-kinase (338 aa).

51–58 is an ATP binding site; sequence HVGGAGKT.

Belongs to the LpxK family.

The enzyme catalyses a lipid A disaccharide + ATP = a lipid IVA + ADP + H(+). Its pathway is glycolipid biosynthesis; lipid IV(A) biosynthesis; lipid IV(A) from (3R)-3-hydroxytetradecanoyl-[acyl-carrier-protein] and UDP-N-acetyl-alpha-D-glucosamine: step 6/6. Functionally, transfers the gamma-phosphate of ATP to the 4'-position of a tetraacyldisaccharide 1-phosphate intermediate (termed DS-1-P) to form tetraacyldisaccharide 1,4'-bis-phosphate (lipid IVA). This Bradyrhizobium diazoefficiens (strain JCM 10833 / BCRC 13528 / IAM 13628 / NBRC 14792 / USDA 110) protein is Tetraacyldisaccharide 4'-kinase.